The primary structure comprises 459 residues: Ribulose bisphosphate carboxylase (459 aa).

Asparagine 111 serves as a coordination point for substrate. Lysine 166 (proton acceptor) is an active-site residue. Residue lysine 168 coordinates substrate. Mg(2+) is bound by residues lysine 191, aspartate 193, and glutamate 194. At lysine 191 the chain carries N6-carboxylysine. Histidine 287 functions as the Proton acceptor in the catalytic mechanism. Residues arginine 288, histidine 321, and serine 368 each coordinate substrate.

The protein belongs to the RuBisCO large chain family. Type II subfamily. As to quaternary structure, homodimer. It depends on Mg(2+) as a cofactor.

The enzyme catalyses 2 (2R)-3-phosphoglycerate + 2 H(+) = D-ribulose 1,5-bisphosphate + CO2 + H2O. It catalyses the reaction D-ribulose 1,5-bisphosphate + O2 = 2-phosphoglycolate + (2R)-3-phosphoglycerate + 2 H(+). In terms of biological role, ruBisCO catalyzes two reactions: the carboxylation of D-ribulose 1,5-bisphosphate, the primary event in carbon dioxide fixation, as well as the oxidative fragmentation of the pentose substrate. Both reactions occur simultaneously and in competition at the same active site. This Dechloromonas aromatica (strain RCB) protein is Ribulose bisphosphate carboxylase.